The primary structure comprises 429 residues: Probable electron transfer flavoprotein-quinone oxidoreductase YdiS (429 aa).

8–22 (AIVVGAGVAGSVAAL) serves as a coordination point for FAD.

It belongs to the ETF-QO/FixC family. FAD is required as a cofactor.

Its function is as follows. Probably accepts electrons from YdiQ/YdiR and reduces a quinone. This Escherichia coli (strain K12) protein is Probable electron transfer flavoprotein-quinone oxidoreductase YdiS (ydiS).